A 77-amino-acid chain; its full sequence is Acyl carrier protein (77 aa).

One can recognise a Carrier domain in the interval 2–77 (SDIADRVKKI…DAVKFISEAA (76 aa)). Position 37 is an O-(pantetheine 4'-phosphoryl)serine (S37).

The protein belongs to the acyl carrier protein (ACP) family. In terms of processing, 4'-phosphopantetheine is transferred from CoA to a specific serine of apo-ACP by AcpS. This modification is essential for activity because fatty acids are bound in thioester linkage to the sulfhydryl of the prosthetic group.

The protein localises to the cytoplasm. The protein operates within lipid metabolism; fatty acid biosynthesis. Its function is as follows. Carrier of the growing fatty acid chain in fatty acid biosynthesis. This chain is Acyl carrier protein, found in Cereibacter sphaeroides (strain ATCC 17029 / ATH 2.4.9) (Rhodobacter sphaeroides).